A 431-amino-acid polypeptide reads, in one-letter code: Serine--tRNA ligase (431 aa).

238-240 (TSE) serves as a coordination point for L-serine. 269 to 271 (RSE) serves as a coordination point for ATP. L-serine is bound at residue Glu-292. An ATP-binding site is contributed by 356-359 (EISS). Ser-391 contacts L-serine.

The protein belongs to the class-II aminoacyl-tRNA synthetase family. Type-1 seryl-tRNA synthetase subfamily. In terms of assembly, homodimer. The tRNA molecule binds across the dimer.

The protein resides in the cytoplasm. The enzyme catalyses tRNA(Ser) + L-serine + ATP = L-seryl-tRNA(Ser) + AMP + diphosphate + H(+). The catalysed reaction is tRNA(Sec) + L-serine + ATP = L-seryl-tRNA(Sec) + AMP + diphosphate + H(+). Its pathway is aminoacyl-tRNA biosynthesis; selenocysteinyl-tRNA(Sec) biosynthesis; L-seryl-tRNA(Sec) from L-serine and tRNA(Sec): step 1/1. In terms of biological role, catalyzes the attachment of serine to tRNA(Ser). Is also able to aminoacylate tRNA(Sec) with serine, to form the misacylated tRNA L-seryl-tRNA(Sec), which will be further converted into selenocysteinyl-tRNA(Sec). In Leptothrix cholodnii (strain ATCC 51168 / LMG 8142 / SP-6) (Leptothrix discophora (strain SP-6)), this protein is Serine--tRNA ligase.